Consider the following 146-residue polypeptide: Putative esterase DR_2321 (146 aa).

This sequence belongs to the thioesterase PaaI family.

This chain is Putative esterase DR_2321, found in Deinococcus radiodurans (strain ATCC 13939 / DSM 20539 / JCM 16871 / CCUG 27074 / LMG 4051 / NBRC 15346 / NCIMB 9279 / VKM B-1422 / R1).